Reading from the N-terminus, the 558-residue chain is MKNINPTKTKSWKSLKKHFLNINTTHILDLFKQNKYRFLSFSTIFNNEILLDYSKNLITEETINKLIDLAKECDLPGAIKSMFQGAKINRSENRAVLHTALRNRKNIPILVDGHDIMPNINTVLEKMKIFCQNIIQGYWKGYTNKNITDIVNIGIGGSNLGPHMVTEALTPYKNHLNIHFVSNIDGTHLFEVLKKINPETTLFLITSKTFTTQETMTNAFSARNWFVQKITKSSSFNHYEQHISKHFIALSANPVEVKKFGINPSTNMFEFWEWVGGRYSLWSSVGLSIMLSLGSNHFESLLDGAYAMDMHFKNTPLNKNIPVILALIGIWYNNFFLSETEAIFPYDQYMHRFAAYIQQSNMESNGKCVDRNGYPINYQTGPIVWGESGTNGQHSFFQLIHQGTKMIPCDFIAPVLSHHPIFDHHDKLIANFLAQTKALAFGKKLEEITQEYITKKQSYIYDLNILPFKVFKGNNPSNSILIKKITPYTLGALIALYEHKIFTQGVIFNIYTFDQWGVELGKQLADDIYSILKQTNINPQYDSSTNGLINYYKYWSQA.

Glu-363 (proton donor) is an active-site residue. Catalysis depends on residues His-394 and Lys-522.

This sequence belongs to the GPI family.

It is found in the cytoplasm. It carries out the reaction alpha-D-glucose 6-phosphate = beta-D-fructose 6-phosphate. It participates in carbohydrate biosynthesis; gluconeogenesis. The protein operates within carbohydrate degradation; glycolysis; D-glyceraldehyde 3-phosphate and glycerone phosphate from D-glucose: step 2/4. Functionally, catalyzes the reversible isomerization of glucose-6-phosphate to fructose-6-phosphate. This Blochmanniella floridana protein is Glucose-6-phosphate isomerase.